Consider the following 453-residue polypeptide: Bifunctional protein GlmU (453 aa).

Residues 1–225 (MNIVILAAGT…EWETLGVNSK (225 aa)) form a pyrophosphorylase region. Residues 6 to 9 (LAAG), lysine 20, glutamine 71, 76 to 77 (GT), 98 to 100 (YGD), glycine 135, glutamate 150, asparagine 165, and asparagine 223 each bind UDP-N-acetyl-alpha-D-glucosamine. Aspartate 100 serves as a coordination point for Mg(2+). Asparagine 223 provides a ligand contact to Mg(2+). The linker stretch occupies residues 226-246 (AQLAELERIHQRKLAEALLAD). The segment at 247 to 453 (GVTLADPARI…GYVRPVKKKS (207 aa)) is N-acetyltransferase. UDP-N-acetyl-alpha-D-glucosamine is bound by residues arginine 329 and lysine 347. The Proton acceptor role is filled by histidine 359. Residues tyrosine 362 and asparagine 373 each coordinate UDP-N-acetyl-alpha-D-glucosamine. Acetyl-CoA contacts are provided by residues alanine 376, 382 to 383 (NY), serine 401, and alanine 419.

It in the N-terminal section; belongs to the N-acetylglucosamine-1-phosphate uridyltransferase family. This sequence in the C-terminal section; belongs to the transferase hexapeptide repeat family. In terms of assembly, homotrimer. It depends on Mg(2+) as a cofactor.

Its subcellular location is the cytoplasm. It catalyses the reaction alpha-D-glucosamine 1-phosphate + acetyl-CoA = N-acetyl-alpha-D-glucosamine 1-phosphate + CoA + H(+). The catalysed reaction is N-acetyl-alpha-D-glucosamine 1-phosphate + UTP + H(+) = UDP-N-acetyl-alpha-D-glucosamine + diphosphate. Its pathway is nucleotide-sugar biosynthesis; UDP-N-acetyl-alpha-D-glucosamine biosynthesis; N-acetyl-alpha-D-glucosamine 1-phosphate from alpha-D-glucosamine 6-phosphate (route II): step 2/2. It participates in nucleotide-sugar biosynthesis; UDP-N-acetyl-alpha-D-glucosamine biosynthesis; UDP-N-acetyl-alpha-D-glucosamine from N-acetyl-alpha-D-glucosamine 1-phosphate: step 1/1. The protein operates within bacterial outer membrane biogenesis; LPS lipid A biosynthesis. In terms of biological role, catalyzes the last two sequential reactions in the de novo biosynthetic pathway for UDP-N-acetylglucosamine (UDP-GlcNAc). The C-terminal domain catalyzes the transfer of acetyl group from acetyl coenzyme A to glucosamine-1-phosphate (GlcN-1-P) to produce N-acetylglucosamine-1-phosphate (GlcNAc-1-P), which is converted into UDP-GlcNAc by the transfer of uridine 5-monophosphate (from uridine 5-triphosphate), a reaction catalyzed by the N-terminal domain. This chain is Bifunctional protein GlmU, found in Burkholderia thailandensis (strain ATCC 700388 / DSM 13276 / CCUG 48851 / CIP 106301 / E264).